We begin with the raw amino-acid sequence, 36 residues long: Serum amyloid P-component (36 aa).

Residues Ser6–Met36 form the Pentraxin (PTX) domain.

Belongs to the pentraxin family. As to quaternary structure, homopentamer. Discoid arrangement of 5 covalently bound subunits. Requires Ca(2+) as cofactor.

It localises to the secreted. This is Serum amyloid P-component from Salmo salar (Atlantic salmon).